The primary structure comprises 563 residues: Adenine deaminase (563 aa).

This sequence belongs to the metallo-dependent hydrolases superfamily. Adenine deaminase family. Mn(2+) serves as cofactor.

The catalysed reaction is adenine + H2O + H(+) = hypoxanthine + NH4(+). The polypeptide is Adenine deaminase (Brucella anthropi (strain ATCC 49188 / DSM 6882 / CCUG 24695 / JCM 21032 / LMG 3331 / NBRC 15819 / NCTC 12168 / Alc 37) (Ochrobactrum anthropi)).